A 483-amino-acid chain; its full sequence is Aspartyl/glutamyl-tRNA(Asn/Gln) amidotransferase subunit B (483 aa).

This sequence belongs to the GatB/GatE family. GatB subfamily. As to quaternary structure, heterotrimer of A, B and C subunits.

It catalyses the reaction L-glutamyl-tRNA(Gln) + L-glutamine + ATP + H2O = L-glutaminyl-tRNA(Gln) + L-glutamate + ADP + phosphate + H(+). The enzyme catalyses L-aspartyl-tRNA(Asn) + L-glutamine + ATP + H2O = L-asparaginyl-tRNA(Asn) + L-glutamate + ADP + phosphate + 2 H(+). Allows the formation of correctly charged Asn-tRNA(Asn) or Gln-tRNA(Gln) through the transamidation of misacylated Asp-tRNA(Asn) or Glu-tRNA(Gln) in organisms which lack either or both of asparaginyl-tRNA or glutaminyl-tRNA synthetases. The reaction takes place in the presence of glutamine and ATP through an activated phospho-Asp-tRNA(Asn) or phospho-Glu-tRNA(Gln). This is Aspartyl/glutamyl-tRNA(Asn/Gln) amidotransferase subunit B from Anaeromyxobacter sp. (strain Fw109-5).